Here is a 159-residue protein sequence, read N- to C-terminus: Probable carbonic anhydrase (159 aa).

Residues 33–35 and 48–49 each bind substrate; these read RGD and QD. Residues His-54, His-71, and His-76 each contribute to the Zn(2+) site.

It belongs to the gamma-class carbonic anhydrase family. It depends on Zn(2+) as a cofactor.

The catalysed reaction is hydrogencarbonate + H(+) = CO2 + H2O. Probably reversibly hydrates carbon dioxide. This is Probable carbonic anhydrase from Methanocaldococcus jannaschii (strain ATCC 43067 / DSM 2661 / JAL-1 / JCM 10045 / NBRC 100440) (Methanococcus jannaschii).